A 474-amino-acid chain; its full sequence is Alginate biosynthesis protein AlgX (474 aa).

A signal peptide spans 1–26 (MKTRTSRLFRLSALAAGLCLAQAALA). Positions 27–347 (ADPGAAPSYQ…QAMPLVDNGC (321 aa)) are SGNH hydrolase-like domain. Cysteines 44 and 229 form a disulfide. The active site involves aspartate 174. Catalysis depends on histidine 176, which acts as the Proton acceptor. Serine 269 serves as the catalytic Nucleophile. Cysteines 347 and 460 form a disulfide. The segment at 348 to 474 (SGRKTVLSRK…AKASQSVAGR (127 aa)) is CBM domain.

This sequence belongs to the AlgX family. Monomer. Interacts with AlgK and MucD.

Its subcellular location is the periplasm. It functions in the pathway glycan biosynthesis; alginate biosynthesis. Its function is as follows. Plays two roles in the biosynthesis of the exopolysaccharide alginate: protects alginate from degradation as the polymer traverses the periplasm, and also plays a role in its O-acetylation. Acetylation of alginate causes the cells in the biofilm to adhere better to lung epithelium, form microcolonies, and resist the effects of the host immune system and/or antibiotics. Displays a low acetylesterase activity in vitro using a pseudosubstrate, 3-carboxyumbelliferyl acetate. Probably has acetyltransferase activity in vivo. The polypeptide is Alginate biosynthesis protein AlgX (algX) (Pseudomonas aeruginosa (strain ATCC 15692 / DSM 22644 / CIP 104116 / JCM 14847 / LMG 12228 / 1C / PRS 101 / PAO1)).